We begin with the raw amino-acid sequence, 197 residues long: ATP-dependent Clp protease proteolytic subunit (197 aa).

Catalysis depends on S98, which acts as the Nucleophile. The active site involves H123.

The protein belongs to the peptidase S14 family. As to quaternary structure, fourteen ClpP subunits assemble into 2 heptameric rings which stack back to back to give a disk-like structure with a central cavity, resembling the structure of eukaryotic proteasomes.

It is found in the cytoplasm. The enzyme catalyses Hydrolysis of proteins to small peptides in the presence of ATP and magnesium. alpha-casein is the usual test substrate. In the absence of ATP, only oligopeptides shorter than five residues are hydrolyzed (such as succinyl-Leu-Tyr-|-NHMec, and Leu-Tyr-Leu-|-Tyr-Trp, in which cleavage of the -Tyr-|-Leu- and -Tyr-|-Trp bonds also occurs).. In terms of biological role, cleaves peptides in various proteins in a process that requires ATP hydrolysis. Has a chymotrypsin-like activity. Plays a major role in the degradation of misfolded proteins. The sequence is that of ATP-dependent Clp protease proteolytic subunit from Pediococcus pentosaceus (strain ATCC 25745 / CCUG 21536 / LMG 10740 / 183-1w).